Consider the following 263-residue polypeptide: Endonuclease 8 (263 aa).

Residue P2 is the Schiff-base intermediate with DNA of the active site. Catalysis depends on E3, which acts as the Proton donor. K53 acts as the Proton donor; for beta-elimination activity in catalysis. Positions 70, 125, and 169 each coordinate DNA. Residues 229-263 (KVFHRDGESCERCGGIIERTMLSSRPFYWCPHCQR) form an FPG-type zinc finger. R253 serves as the catalytic Proton donor; for delta-elimination activity.

This sequence belongs to the FPG family. It depends on Zn(2+) as a cofactor.

It carries out the reaction 2'-deoxyribonucleotide-(2'-deoxyribose 5'-phosphate)-2'-deoxyribonucleotide-DNA = a 3'-end 2'-deoxyribonucleotide-(2,3-dehydro-2,3-deoxyribose 5'-phosphate)-DNA + a 5'-end 5'-phospho-2'-deoxyribonucleoside-DNA + H(+). In terms of biological role, involved in base excision repair of DNA damaged by oxidation or by mutagenic agents. Acts as a DNA glycosylase that recognizes and removes damaged bases. Has a preference for oxidized pyrimidines, such as thymine glycol, 5,6-dihydrouracil and 5,6-dihydrothymine. Has AP (apurinic/apyrimidinic) lyase activity and introduces nicks in the DNA strand. Cleaves the DNA backbone by beta-delta elimination to generate a single-strand break at the site of the removed base with both 3'- and 5'-phosphates. The polypeptide is Endonuclease 8 (Pectobacterium carotovorum subsp. carotovorum (strain PC1)).